Reading from the N-terminus, the 70-residue chain is Large ribosomal subunit protein bL31 (70 aa).

Positions 16, 18, 37, and 40 each coordinate Zn(2+).

Belongs to the bacterial ribosomal protein bL31 family. Type A subfamily. Part of the 50S ribosomal subunit. The cofactor is Zn(2+).

Its function is as follows. Binds the 23S rRNA. This is Large ribosomal subunit protein bL31 from Saccharophagus degradans (strain 2-40 / ATCC 43961 / DSM 17024).